The sequence spans 637 residues: GTPase-activating protein GYP1 (637 aa).

Basic and acidic residues predominate over residues 1–17 (MGVRSAAKEMHERDHNS). 2 disordered regions span residues 1–152 (MGVR…GDRY) and 187–233 (RTLS…NDSK). The span at 18-27 (DSSSLVTSLM) shows a compositional bias: polar residues. The segment covering 28–45 (KSWRISSASSSKKPSLYK) has biased composition (low complexity). Residues 46-59 (MNTTESTSLPSGYA) are compositionally biased toward polar residues. Ser-69 carries the phosphoserine modification. Polar residues-rich tracts occupy residues 79 to 91 (QQAS…NSYS) and 98 to 107 (PTLSTASNES). Positions 115 to 127 (RQHHQRHHHHQQP) are enriched in basic residues. Low complexity-rich tracts occupy residues 128–142 (RHSS…CSNS) and 187–207 (RTLS…MGTS). The span at 208–223 (AVRNSSSSFTYPQLPQ) shows a compositional bias: polar residues. Position 250 is a phosphoserine (Ser-250). A Rab-GAP TBC domain is found at 280 to 508 (GIPKIHRPVV…RMWDTYLSET (229 aa)). The segment at 543-564 (DFQSPTTALSNMTPNNAVEDSG) is disordered.

It is found in the golgi apparatus. The protein localises to the golgi stack. GTPase-activating protein (GAP) that stimulates specifically the intrinsic GTPase activity of Ypt/Rab-type GTPases YPT1 and YPT7. Functions on the Golgi as a negative regulator of YPT1. Functions on the vacuole as a negative regulator of YPT7. It is also active on SEC4 and YPT51. Provides a catalytic arginine (arginine finger) and glutamine (glutamine finger) in trans to accelerate the GTP hydrolysis rate of the substrate GTPase. This chain is GTPase-activating protein GYP1 (GYP1), found in Saccharomyces cerevisiae (strain ATCC 204508 / S288c) (Baker's yeast).